Reading from the N-terminus, the 95-residue chain is Corticostatin-3 (95 aa).

Residues 1-19 (MRTLALLAAILLVALQAQA) form the signal peptide. A propeptide spanning residues 20-62 (EHVSVSIDEVVDQQPPQAEDQDVAIYVKEHESSALEALGVKAG) is cleaved from the precursor. Cystine bridges form between C65–C93, C67–C82, and C72–C92.

The protein belongs to the alpha-defensin family.

It is found in the secreted. Its function is as follows. This peptide has antibiotic, anti-fungi and antiviral activity. It also inhibits corticotropin (ACTH) stimulated corticosterone production. The chain is Corticostatin-3 from Oryctolagus cuniculus (Rabbit).